Reading from the N-terminus, the 867-residue chain is Alanine--tRNA ligase (867 aa).

H559, H563, C661, and H665 together coordinate Zn(2+).

It belongs to the class-II aminoacyl-tRNA synthetase family. It depends on Zn(2+) as a cofactor.

The protein localises to the cytoplasm. The enzyme catalyses tRNA(Ala) + L-alanine + ATP = L-alanyl-tRNA(Ala) + AMP + diphosphate. In terms of biological role, catalyzes the attachment of alanine to tRNA(Ala) in a two-step reaction: alanine is first activated by ATP to form Ala-AMP and then transferred to the acceptor end of tRNA(Ala). Also edits incorrectly charged Ser-tRNA(Ala) and Gly-tRNA(Ala) via its editing domain. This Aquifex aeolicus (strain VF5) protein is Alanine--tRNA ligase.